We begin with the raw amino-acid sequence, 287 residues long: Probable aquaporin PIP1-5 (287 aa).

Met1 carries the post-translational modification N-acetylmethionine. Residues 1 to 34 (MEGKEEDVNVGANKFPERQPIGTAAQTESKDYKE) are disordered. The Cytoplasmic segment spans residues 1 to 55 (MEGKEEDVNVGANKFPERQPIGTAAQTESKDYKEPPPAPFFEPGELKSWSFYRAG). Residues 56 to 76 (IAEFIATFLFLYVTVLTVMGV) form a helical membrane-spanning segment. Over 77 to 92 (KRAPNMCASVGIQGIA) the chain is Extracellular. The chain crosses the membrane as a helical span at residues 93–113 (WAFGGMIFALVYCTAGISGGH). At 114 to 133 (INPAVTFGLFLARKLSLTRA) the chain is on the cytoplasmic side. Positions 115 to 117 (NPA) match the NPA 1 motif. The helical transmembrane segment at 134-154 (LFYIVMQCLGAICGAGVVKGF) threads the bilayer. Over 155–175 (QPGLYQTNGGGANVVAHGYTK) the chain is Extracellular. The helical transmembrane segment at 176–196 (GSGLGAEIVGTFVLVYTVFSA) threads the bilayer. Over 197-209 (TDAKRSARDSHVP) the chain is Cytoplasmic. A helical membrane pass occupies residues 210–230 (ILAPLPIGFAVFLVHLATIPI). Topologically, residues 231 to 257 (TGTGINPARSLGAAIIYNKDHAWDDHW) are extracellular. Positions 236-238 (NPA) match the NPA 2 motif. A helical membrane pass occupies residues 258–278 (IFWVGPFIGAALAALYHQIVI). Over 279–287 (RAIPFKSKT) the chain is Cytoplasmic. Ser285 carries the phosphoserine modification.

The protein belongs to the MIP/aquaporin (TC 1.A.8) family. PIP (TC 1.A.8.11) subfamily. In terms of tissue distribution, predominantly expressed in green siliques. Also expressed above ground, in roots and flower buds.

It is found in the cell membrane. In terms of biological role, aquaporins facilitate the transport of water and small neutral solutes across cell membranes. The chain is Probable aquaporin PIP1-5 (PIP1-5) from Arabidopsis thaliana (Mouse-ear cress).